A 342-amino-acid polypeptide reads, in one-letter code: Probable long-chain-alcohol O-fatty-acyltransferase 3 (342 aa).

A run of 8 helical transmembrane segments spans residues 9 to 29 (IKLW…STGI), 36 to 56 (LLSV…FSYV), 58 to 78 (FSGC…ILFS), 115 to 135 (IPIW…QMYE), 153 to 173 (IFLE…ITLG), 227 to 247 (MFLG…MLFF), 255 to 275 (TGEV…EVAV), and 297 to 317 (VGFV…SGII).

The protein belongs to the wax synthase family.

The protein localises to the membrane. It catalyses the reaction a long chain fatty alcohol + a fatty acyl-CoA = a wax ester + CoA. In terms of biological role, catalyzes the final step in the synthesis of long-chain linear esters (waxes). This is Probable long-chain-alcohol O-fatty-acyltransferase 3 (AT3) from Arabidopsis thaliana (Mouse-ear cress).